We begin with the raw amino-acid sequence, 447 residues long: Methylenetetrahydrofolate--tRNA-(uracil-5-)-methyltransferase TrmFO (447 aa).

10–15 contributes to the FAD binding site; the sequence is GAGLAG.

It belongs to the MnmG family. TrmFO subfamily. FAD serves as cofactor.

Its subcellular location is the cytoplasm. The catalysed reaction is uridine(54) in tRNA + (6R)-5,10-methylene-5,6,7,8-tetrahydrofolate + NADH + H(+) = 5-methyluridine(54) in tRNA + (6S)-5,6,7,8-tetrahydrofolate + NAD(+). The enzyme catalyses uridine(54) in tRNA + (6R)-5,10-methylene-5,6,7,8-tetrahydrofolate + NADPH + H(+) = 5-methyluridine(54) in tRNA + (6S)-5,6,7,8-tetrahydrofolate + NADP(+). In terms of biological role, catalyzes the folate-dependent formation of 5-methyl-uridine at position 54 (M-5-U54) in all tRNAs. In Lactococcus lactis subsp. lactis (strain IL1403) (Streptococcus lactis), this protein is Methylenetetrahydrofolate--tRNA-(uracil-5-)-methyltransferase TrmFO.